The primary structure comprises 2194 residues: MAQPQLLQIKLSRFDAQPWGFRLQGGTDFAQPLLVQKVNAGSLSEQAGLQPGDAVVKINDVDVFNLRHKDAQDIVVRSGNNFVITVQRGGSTWRPHVTPTGNVPQPNSPYLQTVTKTSLAHKQQDSQHIGCGYNNAARPFSNGGDGGVKSIVNKQYNTPVGIYSDESIAETLSAQAEVLAGGVLGVNFKKNEKEYQGDRSEVLKFLREEETGQSTPAFGNSHYEHDAPQQLQQPQQQYNQHQQHYHQQQQQQQSSTTRHVSAPVNSPKPPSTGGLPTGQNICTECERLITGVFVRIKDKNLHVECFKCATCGTSLKNQGYYNFNNKLYCDIHAKQAAINNPPTGTEGYVPVPIKPNTKLSASTISSALNSHGYGGHSNGYSNGNSTPAPAPVASSQATATVATVAPSAATAATAAATPQAATATDSPAATASSSDNMSAYVADEPSSIYGQISAESVALAPPPPQPPTAGGGDQPFEYVTLTGNVIRSVQAPGKGACPSYKVNQGYARPFGAAAPKSPVSYPPQQQQQSPRPAPGGQNPYATLPRSNVGQQGGEAVEELQPEFEEEDCYEMDIEVALAASRQSQRGSSFTWPPPQDDSHLAPTAAPLYIPPPETQHVVVSNPVQQVPPLPPGGATARLDPQPVVGTSANGAPQWQSYSAPQLTTASARQLAEQESSSDSYTSTSTTTTTTSEEYQRMYAAQVQAYQMQEQSGSEFDYQVDYASTQDSVQDYPSGRRSAQECVDSLAVPLSTYKLVDMVREVTPSPVTTPTQTPAPAAPTTRRVVFNDEPEIKELPQLPAELETIPEASEAVEDREGLVIEQRCQILESERKFQPTPEIKIEIAPVRQIPPTKIPNPMPKEWINPMIRVLTTAPEVPFHLVECPFPRPCGDDFEAEAAAAEAAKTQEVPEPLPPQVSAAPPATVSVEPSPAPLRESPPRGSRLSQAMVTAPEFELKFAPPADQGIPLPEETEPYMPPPIDTKPYLREDYRPKSPFVSALTTAPDRPFEGHFDKDVPIHMIDLPTPKEHLSMCDALCTAPERGYTPLNPENAMHRVDEEQKQQELKKREFQVLDHEEELGIRPEPPQSVEYYETRRDQPRKSSAFAAMQAFQPSREPLSSNTVSNAGSVADTPRASIVSALKEETDLEYQKYLKAQQRNQKRLDYFHQKEEELSGLQGQQLTQLQRELSNQQQNLLSQQQLQQSKLLQLQQCVQSQELQQQVQHLTQKSQQQPPQANQQQQQQQQQRGTQQQQHSQVTQRTQQQQQQVPQQVTQQQQQEHSLLSQTTLAETQTLQANAQSQSSASYSSKATACSNSSSTVPPANTSTAFAPAPAPAPTSIPVRPSAIAVQSSYCSSQFDVHELIEETAEELEHSEVLFPPPSPLSHLTKQGKAVQSGLHKADSIPKYQRNWTVLPTQSPIRTPEPQELRENVPLAFVDAPKAPVTSDSSTVHRPIAQVAAPTTVVAPSREREKERRPQLSVPIIVEDRSGPVTMAFQPLDELVRPDQALTPTRPYTPSLTNKPAPIVPFYQTEEKLVFEECSATHARNYNELNASPFPDRTRSPAPGPPPNPLNAIRAPRMKEPETKSNILSVSGGPRLQTGSITTGQSYQGQLLAHSEQSSQSASQSYNQQPERITEQRVGNLNIQQREQSSQLQQQAQSQTQSQTRSQVGNTQIERRRKVTEEFERTQSAKTIEIRTGSQSVSQSKAQSQSISQAQTQAQSQSQNQSDTERRSSYGKTGFVASQAKRLSCMEEEISSLTSQSQAISARASALGEGCFPNLRSPTFDSKFPLKPAPAESIVPGYATVPAATKMLTAPPPGFLQQQQQQQQRSAFSGYQATTSSVQQSSFASSSKATTSSLSSSSASASASASVARSSQSLTQASAITTTTNNQATTAYRSSNGSITKPNLASRPSIASITAPGSASAPAPVPSAAPTKATAPFKAPIVPKSVIANAVNAAAPPAPAVFPPDLSDLNLNSNVDNSPGAGGKSAGAFGATSAPKRGRGILNKAAGPGVRIPLCNSCNVQIRGPFITALGRIWCPDHFICVNGNCRRPLQDIGFVEEKGDLYCEYCFEKYLAPTCSKCAGKIKGDCLNAIGKHFHPECFTCGQCGKIFGNRPFFLEDGNAYCEADWNELFTTKCFACGFPVEAGDRWVEALNHNYHSQCFNCTFCKQNLEGQSFYNKGGRPFCKNHAR.

In terms of domain architecture, PDZ spans 8-90 (QIKLSRFDAQ…NFVITVQRGG (83 aa)). The disordered stretch occupies residues 211–277 (TGQSTPAFGN…KPPSTGGLPT (67 aa)). A compositionally biased stretch (low complexity) spans 228-253 (PQQLQQPQQQYNQHQQHYHQQQQQQQ). The LIM zinc-binding 1 domain occupies 280 to 339 (NICTECERLITGVFVRIKDKNLHVECFKCATCGTSLKNQGYYNFNNKLYCDIHAKQAAIN). The span at 415 to 435 (AATPQAATATDSPAATASSSD) shows a compositional bias: low complexity. 11 disordered regions span residues 415-436 (AATPQAATATDSPAATASSSDN), 457-476 (VALAPPPPQPPTAGGGDQPF), 511-558 (GAAA…AVEE), 580-611 (SRQSQRGSSFTWPPPQDDSHLAPTAAPLYIPP), 623-692 (VQQV…TTSE), 896-940 (AAAA…PRGS), 1223-1260 (LTQKSQQQPPQANQQQQQQQQQRGTQQQQHSQVTQRTQ), 1297-1322 (QSQSSASYSSKATACSNSSSTVPPAN), 1550-1632 (LNAS…QQPE), 1646-1738 (QREQ…YGKT), and 1815-1837 (APPPGFLQQQQQQQQRSAFSGYQ). Residues 515–530 (PKSPVSYPPQQQQQSP) are compositionally biased toward low complexity. 2 stretches are compositionally biased toward polar residues: residues 580 to 590 (SRQSQRGSSFT) and 644 to 667 (VGTSANGAPQWQSYSAPQLTTASA). A compositionally biased stretch (low complexity) spans 676-692 (SSDSYTSTSTTTTTTSE). Polar residues predominate over residues 1598-1610 (QTGSITTGQSYQG). Low complexity-rich tracts occupy residues 1616–1630 (SEQSSQSASQSYNQQ), 1646–1668 (QREQSSQLQQQAQSQTQSQTRSQ), and 1699–1727 (SQSVSQSKAQSQSISQAQTQAQSQSQNQS). LIM zinc-binding domains follow at residues 2018-2078 (PLCN…KYLA), 2079-2138 (PTCS…LFTT), and 2139-2194 (KCFA…NHAR).

As to quaternary structure, interacts with alpha-actinin (Actn). Expression is first detected in the proctodeum and the midgut primordium. In stage 11 embryos, expression is predominant in the leading edge of epidermal cells adjacent to the amnioserosa. Stage 12 embryos exhibit expression in the midgut and the leading edge. Expressed in several rows of germ band cells next to the leading edge at stage 14. Strong expression is visible in the midgut and pharyngeal muscles of stage 17 embryos. Also expressed in somatic muscles and visceral mesoderm. Colocalizes with mys (beta PS integrin) in myotendinous junctions and with Actn in muscle Z lines.

It is found in the cytoplasm. It localises to the cytoskeleton. Regulator of cell matrix adhesion having two related functions, one upstream of Actn organizing the Z line and the other downstream of integrins regulating assembly of integrin adhesion sites. Also required for the formation of myotendinous junctions in muscles. The polypeptide is PDZ and LIM domain protein Zasp (Zasp52) (Drosophila melanogaster (Fruit fly)).